The primary structure comprises 358 residues: Peptide chain release factor 1 (358 aa).

Gln235 carries the post-translational modification N5-methylglutamine.

Belongs to the prokaryotic/mitochondrial release factor family. In terms of processing, methylated by PrmC. Methylation increases the termination efficiency of RF1.

The protein resides in the cytoplasm. In terms of biological role, peptide chain release factor 1 directs the termination of translation in response to the peptide chain termination codons UAG and UAA. The polypeptide is Peptide chain release factor 1 (Neisseria gonorrhoeae (strain NCCP11945)).